The chain runs to 457 residues: MTTGKIIQVIGAVVDVEFPQNIVPKVYNALEVTNGKNKLILEVEQQLGSGIVRCIAMGVSEGLRRGLTVIDLGHAIKVPVGKSTLSRIMNVLGEPIDMKGIINAEEHWSIHRSAPRYEELALSQEILETGIKVIDLMCPLVKGGKAGLFGGAGVGKTVNMMELIRNIAIEHAGYSVFTGVGERTREGNDFYHEMKDSNVLDKVSLVYGQMNEPPGNRFRVALTGLTIAEKFRDEGHDVLLFIDNIYRYTLAGAEVSALLGRMPSAVGYQPTLSEEMGLLQERITSTKYGSITSIQAVYVPADDLTDPAPATTFSHLDATIVLSRQIASLGIYPAIDPLESTSRQLDPLVVGQKHYDVALGVQGILQRYQELKDIIAILGIDELSEDDKMVVSRARKIQRFLSQPFFVAEVFTGSQGKYVSLQETISGFEDIINGKYDHLPEQKFYMIGSINEAMTKE.

150–157 provides a ligand contact to ATP; it reads GGAGVGKT.

This sequence belongs to the ATPase alpha/beta chains family. In terms of assembly, F-type ATPases have 2 components, CF(1) - the catalytic core - and CF(0) - the membrane proton channel. CF(1) has five subunits: alpha(3), beta(3), gamma(1), delta(1), epsilon(1). CF(0) has three main subunits: a(1), b(2) and c(9-12). The alpha and beta chains form an alternating ring which encloses part of the gamma chain. CF(1) is attached to CF(0) by a central stalk formed by the gamma and epsilon chains, while a peripheral stalk is formed by the delta and b chains.

The protein localises to the cell membrane. It carries out the reaction ATP + H2O + 4 H(+)(in) = ADP + phosphate + 5 H(+)(out). In terms of biological role, produces ATP from ADP in the presence of a proton gradient across the membrane. The catalytic sites are hosted primarily by the beta subunits. This Baumannia cicadellinicola subsp. Homalodisca coagulata protein is ATP synthase subunit beta.